Here is a 126-residue protein sequence, read N- to C-terminus: Large ribosomal subunit protein bL12 (126 aa).

The protein belongs to the bacterial ribosomal protein bL12 family. As to quaternary structure, homodimer. Part of the ribosomal stalk of the 50S ribosomal subunit. Forms a multimeric L10(L12)X complex, where L10 forms an elongated spine to which 2 to 4 L12 dimers bind in a sequential fashion. Binds GTP-bound translation factors.

In terms of biological role, forms part of the ribosomal stalk which helps the ribosome interact with GTP-bound translation factors. Is thus essential for accurate translation. In Rhizobium meliloti (strain 1021) (Ensifer meliloti), this protein is Large ribosomal subunit protein bL12.